A 460-amino-acid polypeptide reads, in one-letter code: Chromosomal replication initiator protein DnaA (460 aa).

The interval M1–I91 is domain I, interacts with DnaA modulators. Residues I91–S122 are domain II. The domain III, AAA+ region stretch occupies residues P123–S342. ATP-binding residues include G169, G171, K172, and T173. Residues L343–K460 form a domain IV, binds dsDNA region.

It belongs to the DnaA family. As to quaternary structure, oligomerizes as a right-handed, spiral filament on DNA at oriC.

The protein localises to the cytoplasm. Plays an essential role in the initiation and regulation of chromosomal replication. ATP-DnaA binds to the origin of replication (oriC) to initiate formation of the DNA replication initiation complex once per cell cycle. Binds the DnaA box (a 9 base pair repeat at the origin) and separates the double-stranded (ds)DNA. Forms a right-handed helical filament on oriC DNA; dsDNA binds to the exterior of the filament while single-stranded (ss)DNA is stabiized in the filament's interior. The ATP-DnaA-oriC complex binds and stabilizes one strand of the AT-rich DNA unwinding element (DUE), permitting loading of DNA polymerase. After initiation quickly degrades to an ADP-DnaA complex that is not apt for DNA replication. Binds acidic phospholipids. The sequence is that of Chromosomal replication initiator protein DnaA from Wolbachia sp. subsp. Brugia malayi (strain TRS).